Here is a 588-residue protein sequence, read N- to C-terminus: Aspartate--tRNA ligase (588 aa).

Residue glutamate 177 participates in L-aspartate binding. The segment at 201 to 204 is aspartate; sequence QLFK. An L-aspartate-binding site is contributed by arginine 223. ATP is bound by residues 223–225 and glutamine 232; that span reads RDE. Histidine 451 contacts L-aspartate. Glutamate 485 provides a ligand contact to ATP. Arginine 492 lines the L-aspartate pocket. 537–540 serves as a coordination point for ATP; sequence GLDR.

It belongs to the class-II aminoacyl-tRNA synthetase family. Type 1 subfamily. Homodimer.

The protein localises to the cytoplasm. It catalyses the reaction tRNA(Asp) + L-aspartate + ATP = L-aspartyl-tRNA(Asp) + AMP + diphosphate. In terms of biological role, catalyzes the attachment of L-aspartate to tRNA(Asp) in a two-step reaction: L-aspartate is first activated by ATP to form Asp-AMP and then transferred to the acceptor end of tRNA(Asp). The sequence is that of Aspartate--tRNA ligase from Staphylococcus aureus (strain Newman).